Here is a 342-residue protein sequence, read N- to C-terminus: Ribosomal RNA small subunit methyltransferase H (342 aa).

Residues 62–64 (GGH), aspartate 82, phenylalanine 108, aspartate 129, and glutamine 136 contribute to the S-adenosyl-L-methionine site. The interval 280–319 (RHSKGQYPEDENLPMPPKRPRYFSKPKRVGPSKAEISHNP) is disordered. The span at 297-309 (KRPRYFSKPKRVG) shows a compositional bias: basic residues.

Belongs to the methyltransferase superfamily. RsmH family.

Its subcellular location is the cytoplasm. The catalysed reaction is cytidine(1402) in 16S rRNA + S-adenosyl-L-methionine = N(4)-methylcytidine(1402) in 16S rRNA + S-adenosyl-L-homocysteine + H(+). Specifically methylates the N4 position of cytidine in position 1402 (C1402) of 16S rRNA. This is Ribosomal RNA small subunit methyltransferase H from Psychrobacter cryohalolentis (strain ATCC BAA-1226 / DSM 17306 / VKM B-2378 / K5).